Reading from the N-terminus, the 136-residue chain is Large ribosomal subunit protein uL16 (136 aa).

This sequence belongs to the universal ribosomal protein uL16 family. As to quaternary structure, part of the 50S ribosomal subunit.

In terms of biological role, binds 23S rRNA and is also seen to make contacts with the A and possibly P site tRNAs. The protein is Large ribosomal subunit protein uL16 of Karelsulcia muelleri (strain GWSS) (Sulcia muelleri).